Reading from the N-terminus, the 89-residue chain is Small ribosomal subunit protein uS15 (89 aa).

Belongs to the universal ribosomal protein uS15 family. Part of the 30S ribosomal subunit. Forms a bridge to the 50S subunit in the 70S ribosome, contacting the 23S rRNA.

Its function is as follows. One of the primary rRNA binding proteins, it binds directly to 16S rRNA where it helps nucleate assembly of the platform of the 30S subunit by binding and bridging several RNA helices of the 16S rRNA. Forms an intersubunit bridge (bridge B4) with the 23S rRNA of the 50S subunit in the ribosome. This chain is Small ribosomal subunit protein uS15, found in Geobacillus kaustophilus (strain HTA426).